The sequence spans 382 residues: D-galactonate dehydratase (382 aa).

Asp-183 serves as a coordination point for Mg(2+). Residue His-185 is the Proton donor of the active site. Positions 209 and 235 each coordinate Mg(2+). Catalysis depends on His-285, which acts as the Proton acceptor.

Belongs to the mandelate racemase/muconate lactonizing enzyme family. GalD subfamily. Requires Mg(2+) as cofactor.

It catalyses the reaction D-galactonate = 2-dehydro-3-deoxy-D-galactonate + H2O. Its pathway is carbohydrate acid metabolism; D-galactonate degradation; D-glyceraldehyde 3-phosphate and pyruvate from D-galactonate: step 1/3. Functionally, catalyzes the dehydration of D-galactonate to 2-keto-3-deoxy-D-galactonate. In Escherichia coli (strain 55989 / EAEC), this protein is D-galactonate dehydratase.